The sequence spans 199 residues: Small ribosomal subunit protein uS4 (199 aa).

In terms of domain architecture, S4 RNA-binding spans 91 to 154 (SRLDNLVYRM…RGLQLIKDAL (64 aa)).

It belongs to the universal ribosomal protein uS4 family. As to quaternary structure, part of the 30S ribosomal subunit. Contacts protein S5. The interaction surface between S4 and S5 is involved in control of translational fidelity.

One of the primary rRNA binding proteins, it binds directly to 16S rRNA where it nucleates assembly of the body of the 30S subunit. Its function is as follows. With S5 and S12 plays an important role in translational accuracy. The polypeptide is Small ribosomal subunit protein uS4 (Brevibacillus brevis (strain 47 / JCM 6285 / NBRC 100599)).